A 203-amino-acid polypeptide reads, in one-letter code: Sarcosine oxidase subunit gamma (203 aa).

This sequence belongs to the SoxG family. In terms of assembly, heterotetramer composed of subunits alpha (SoxA), beta (SoxB), gamma (SoxG) and delta (SoxD).

It localises to the cytoplasm. It catalyses the reaction sarcosine + (6S)-5,6,7,8-tetrahydrofolate + O2 = (6R)-5,10-methylene-5,6,7,8-tetrahydrofolate + glycine + H2O2. The enzyme catalyses sarcosine + O2 + H2O = formaldehyde + glycine + H2O2. In the presence of tetrahydrofolate, catalyzes the oxidative demethylation of sarcosine to yield glycine, 5,10-methylenetetrahydrofolate and hydrogen peroxide. In the absence of tetrahydrofolate, catalyzes the oxidative demethylation of sarcosine to yield glycine, formaldehyde and hydrogen peroxide. In Corynebacterium sp. (strain P-1), this protein is Sarcosine oxidase subunit gamma.